The sequence spans 906 residues: Protein translocase subunit SecA (906 aa).

ATP-binding positions include Gln-89, 107–111 (GEGKT), and Asp-502. Zn(2+) contacts are provided by Cys-890, Cys-892, Cys-901, and His-902.

This sequence belongs to the SecA family. In terms of assembly, monomer and homodimer. Part of the essential Sec protein translocation apparatus which comprises SecA, SecYEG and auxiliary proteins SecDF-YajC and YidC. It depends on Zn(2+) as a cofactor.

The protein localises to the cell inner membrane. It is found in the cytoplasm. It catalyses the reaction ATP + H2O + cellular proteinSide 1 = ADP + phosphate + cellular proteinSide 2.. Functionally, part of the Sec protein translocase complex. Interacts with the SecYEG preprotein conducting channel. Has a central role in coupling the hydrolysis of ATP to the transfer of proteins into and across the cell membrane, serving both as a receptor for the preprotein-SecB complex and as an ATP-driven molecular motor driving the stepwise translocation of polypeptide chains across the membrane. The chain is Protein translocase subunit SecA from Brucella canis (strain ATCC 23365 / NCTC 10854 / RM-666).